A 339-amino-acid polypeptide reads, in one-letter code: Ketol-acid reductoisomerase (NADP(+)) (339 aa).

The KARI N-terminal Rossmann domain occupies 1 to 182 (MRVYYDRDAD…GGGRSGIIET (182 aa)). Residues 24–27 (YGSQ), lysine 48, serine 51, threonine 53, and 83–86 (DELQ) each bind NADP(+). Histidine 108 is a catalytic residue. NADP(+) is bound at residue glycine 134. One can recognise a KARI C-terminal knotted domain in the interval 183–328 (NFKEECETDL…AKLRAMMPWI (146 aa)). Residues aspartate 191, glutamate 195, glutamate 227, and glutamate 231 each coordinate Mg(2+). Serine 252 lines the substrate pocket.

It belongs to the ketol-acid reductoisomerase family. Requires Mg(2+) as cofactor.

The enzyme catalyses (2R)-2,3-dihydroxy-3-methylbutanoate + NADP(+) = (2S)-2-acetolactate + NADPH + H(+). The catalysed reaction is (2R,3R)-2,3-dihydroxy-3-methylpentanoate + NADP(+) = (S)-2-ethyl-2-hydroxy-3-oxobutanoate + NADPH + H(+). Its pathway is amino-acid biosynthesis; L-isoleucine biosynthesis; L-isoleucine from 2-oxobutanoate: step 2/4. The protein operates within amino-acid biosynthesis; L-valine biosynthesis; L-valine from pyruvate: step 2/4. Its function is as follows. Involved in the biosynthesis of branched-chain amino acids (BCAA). Catalyzes an alkyl-migration followed by a ketol-acid reduction of (S)-2-acetolactate (S2AL) to yield (R)-2,3-dihydroxy-isovalerate. In the isomerase reaction, S2AL is rearranged via a Mg-dependent methyl migration to produce 3-hydroxy-3-methyl-2-ketobutyrate (HMKB). In the reductase reaction, this 2-ketoacid undergoes a metal-dependent reduction by NADPH to yield (R)-2,3-dihydroxy-isovalerate. The chain is Ketol-acid reductoisomerase (NADP(+)) from Rhizobium meliloti (strain 1021) (Ensifer meliloti).